A 372-amino-acid polypeptide reads, in one-letter code: Anhydro-N-acetylmuramic acid kinase (372 aa).

Position 12 to 19 (12 to 19 (GTSMDALD)) interacts with ATP.

Belongs to the anhydro-N-acetylmuramic acid kinase family.

The enzyme catalyses 1,6-anhydro-N-acetyl-beta-muramate + ATP + H2O = N-acetyl-D-muramate 6-phosphate + ADP + H(+). Its pathway is amino-sugar metabolism; 1,6-anhydro-N-acetylmuramate degradation. It functions in the pathway cell wall biogenesis; peptidoglycan recycling. In terms of biological role, catalyzes the specific phosphorylation of 1,6-anhydro-N-acetylmuramic acid (anhMurNAc) with the simultaneous cleavage of the 1,6-anhydro ring, generating MurNAc-6-P. Is required for the utilization of anhMurNAc either imported from the medium or derived from its own cell wall murein, and thus plays a role in cell wall recycling. In Coxiella burnetii (strain CbuK_Q154) (Coxiella burnetii (strain Q154)), this protein is Anhydro-N-acetylmuramic acid kinase.